The sequence spans 504 residues: Maturase K (504 aa).

The protein belongs to the intron maturase 2 family. MatK subfamily.

It localises to the plastid. Its subcellular location is the chloroplast. Its function is as follows. Usually encoded in the trnK tRNA gene intron. Probably assists in splicing its own and other chloroplast group II introns. This chain is Maturase K, found in Fagus japonica (Japanese beech).